We begin with the raw amino-acid sequence, 125 residues long: Protein ApaG (125 aa).

The region spanning 1–125 is the ApaG domain; that stretch reads MINSPRVCIQ…FRLAVPTLIH (125 aa).

The polypeptide is Protein ApaG (Salmonella arizonae (strain ATCC BAA-731 / CDC346-86 / RSK2980)).